An 895-amino-acid polypeptide reads, in one-letter code: Procollagen lysyl hydroxylase and glycosyltransferase (895 aa).

A lysyl hydroxylase region region spans residues 1–194 (MISRTYVINL…PSDEFIPIMH (194 aa)). A glucosyl transferase region region spans residues 537–895 (YYFYISGDCI…KRYILVSFVN (359 aa)). One can recognise a Fe2OG dioxygenase domain in the interval 805-895 (DINLAFVVKY…KRYILVSFVN (91 aa)). Residues histidine 825, aspartate 827, and histidine 877 each coordinate Fe cation. The active site involves arginine 887.

The cofactor is Fe cation. L-ascorbate is required as a cofactor.

It catalyses the reaction L-lysyl-[collagen] + 2-oxoglutarate + O2 = (5R)-5-hydroxy-L-lysyl-[collagen] + succinate + CO2. In terms of biological role, displays two enzymatic activities involved in procollagen processing. Forms hydroxylysine residues in -Xaa-Lys-Gly- sequences in collagens. These hydroxylysines are subsequentially glucosylated by a glucosyltransferase activity. Collagen post-translationally modified is detected in mimivirus virion. The chain is Procollagen lysyl hydroxylase and glycosyltransferase from Acanthamoeba polyphaga (Amoeba).